Reading from the N-terminus, the 146-residue chain is Pre-mRNA-splicing factor cwf14 (146 aa).

The protein belongs to the BUD31 (G10) family. In terms of assembly, belongs to the 40S cdc5-associated complex (or cwf complex), a spliceosome sub-complex reminiscent of a late-stage spliceosome composed of the U2, U5 and U6 snRNAs and at least brr2, cdc5, cwf2/prp3, cwf3/syf1, cwf4/syf3, cwf5/ecm2, spp42/cwf6, cwf7/spf27, cwf8, cwf9, cwf10, cwf11, cwf12, prp45/cwf13, cwf14, cwf15, cwf16, cwf17, cwf18, cwf19, cwf20, cwf21, cwf22, cwf23, cwf24, cwf25, cwf26, cyp7/cwf27, cwf28, cwf29/ist3, lea1, msl1, prp5/cwf1, prp10, prp12/sap130, prp17, prp22, sap61, sap62, sap114, sap145, slu7, smb1, smd1, smd3, smf1, smg1 and syf2.

The protein localises to the nucleus. Functionally, involved in mRNA splicing where it associates with cdc5 and the other cwf proteins as part of the spliceosome. The chain is Pre-mRNA-splicing factor cwf14 (cwf14) from Schizosaccharomyces pombe (strain 972 / ATCC 24843) (Fission yeast).